Consider the following 824-residue polypeptide: Type IV secretion system protein PtlC homolog (824 aa).

Residue 456-463 (GQSGSGKT) coordinates ATP.

Belongs to the TrbE/VirB4 family.

The protein localises to the cell membrane. The sequence is that of Type IV secretion system protein PtlC homolog (ptlC) from Bordetella bronchiseptica (strain ATCC BAA-588 / NCTC 13252 / RB50) (Alcaligenes bronchisepticus).